The following is a 402-amino-acid chain: Speedy protein E2B (402 aa).

The segment at 1-89 (MDRTETRFRK…EEPEKELAPE (89 aa)) is disordered. The segment covering 16-39 (GKITTSRQPHPQNEQSPQRSTSGY) has biased composition (polar residues). The span at 76–89 (DESEEEPEKELAPE) shows a compositional bias: acidic residues.

It belongs to the Speedy/Ringo family.

In Homo sapiens (Human), this protein is Speedy protein E2B (SPDYE2B).